Reading from the N-terminus, the 199-residue chain is Acireductone dioxygenase 1 (199 aa).

Residues His-99, His-101, Glu-105, and His-144 each contribute to the Fe(2+) site. Residues His-99, His-101, Glu-105, and His-144 each contribute to the Ni(2+) site.

Belongs to the acireductone dioxygenase (ARD) family. The cofactor is Fe(2+). Requires Ni(2+) as cofactor.

It localises to the cytoplasm. The protein localises to the nucleus. It carries out the reaction 1,2-dihydroxy-5-(methylsulfanyl)pent-1-en-3-one + O2 = 4-methylsulfanyl-2-oxobutanoate + formate + 2 H(+). The enzyme catalyses 1,2-dihydroxy-5-(methylsulfanyl)pent-1-en-3-one + O2 = 3-(methylsulfanyl)propanoate + CO + formate + 2 H(+). It functions in the pathway amino-acid biosynthesis; L-methionine biosynthesis via salvage pathway; L-methionine from S-methyl-5-thio-alpha-D-ribose 1-phosphate: step 5/6. Its function is as follows. Catalyzes 2 different reactions between oxygen and the acireductone 1,2-dihydroxy-3-keto-5-methylthiopentene (DHK-MTPene) depending upon the metal bound in the active site. Fe-containing acireductone dioxygenase (Fe-ARD) produces formate and 2-keto-4-methylthiobutyrate (KMTB), the alpha-ketoacid precursor of methionine in the methionine recycle pathway. Ni-containing acireductone dioxygenase (Ni-ARD) produces methylthiopropionate, carbon monoxide and formate, and does not lie on the methionine recycle pathway. In Arabidopsis thaliana (Mouse-ear cress), this protein is Acireductone dioxygenase 1 (ARD1).